Here is a 324-residue protein sequence, read N- to C-terminus: UPF0158 protein CPn_0518/CP_0235/CPj0518/CpB0539 (324 aa).

This sequence belongs to the UPF0158 family.

The polypeptide is UPF0158 protein CPn_0518/CP_0235/CPj0518/CpB0539 (Chlamydia pneumoniae (Chlamydophila pneumoniae)).